The following is a 778-amino-acid chain: Probable cation-transporting ATPase exp7 (778 aa).

Topologically, residues M1 to I37 are cytoplasmic. Residues V38–L57 traverse the membrane as a helical segment. Residues A58–S64 lie on the Extracellular side of the membrane. A helical transmembrane segment spans residues N65–L84. Over R85–L209 the chain is Cytoplasmic. A helical membrane pass occupies residues D210–L229. Over E230–S242 the chain is Extracellular. Residues V243–L260 traverse the membrane as a helical segment. Residues L261–I586 are Cytoplasmic-facing. The active-site 4-aspartylphosphate intermediate is the D298. Mg(2+) is bound by residues D532 and D536. The helical transmembrane segment at A587–I606 threads the bilayer. At C607–F624 the chain is on the extracellular side. Residues I625–T645 traverse the membrane as a helical segment. Residues F646–L663 are Cytoplasmic-facing. The chain crosses the membrane as a helical span at residues R664–A684. Topologically, residues S685–S689 are extracellular. The chain crosses the membrane as a helical span at residues E690–S708. Over V709–F716 the chain is Cytoplasmic. The chain crosses the membrane as a helical span at residues T717–R739. Topologically, residues I740–Y757 are extracellular. Residues G758–K777 traverse the membrane as a helical segment. K778 is a topological domain (cytoplasmic).

Belongs to the cation transport ATPase (P-type) (TC 3.A.3) family.

The protein resides in the cell membrane. The catalysed reaction is ATP + H2O = ADP + phosphate + H(+). The protein is Probable cation-transporting ATPase exp7 (exp7) of Streptococcus pneumoniae serotype 4 (strain ATCC BAA-334 / TIGR4).